The sequence spans 486 residues: Achaete-scute complex protein T8 (486 aa).

Disordered regions lie at residues 1–26 (MAAL…GIKT) and 75–158 (AAST…LPLP). The segment covering 75-86 (AASTTNTTPISS) has biased composition (polar residues). Residues 159–223 (QAVARRNARE…RMAVEYIRSL (65 aa)) form the bHLH domain.

In terms of assembly, efficient DNA binding requires dimerization with another bHLH protein. As to expression, l(1)SC, SC and AC strongly label the presumptive stomatogastric nervous system, while ASE is more prominent in the presumptive procephalic lobe.

Involved in the determination of the neuronal precursors of optic lobes in the central nervous system. In Drosophila melanogaster (Fruit fly), this protein is Achaete-scute complex protein T8 (ase).